Consider the following 278-residue polypeptide: Tryptophan synthase alpha chain (278 aa).

Active-site proton acceptor residues include E50 and D61.

Belongs to the TrpA family. Tetramer of two alpha and two beta chains.

The enzyme catalyses (1S,2R)-1-C-(indol-3-yl)glycerol 3-phosphate + L-serine = D-glyceraldehyde 3-phosphate + L-tryptophan + H2O. It functions in the pathway amino-acid biosynthesis; L-tryptophan biosynthesis; L-tryptophan from chorismate: step 5/5. Its function is as follows. The alpha subunit is responsible for the aldol cleavage of indoleglycerol phosphate to indole and glyceraldehyde 3-phosphate. In Rhodopseudomonas palustris (strain ATCC BAA-98 / CGA009), this protein is Tryptophan synthase alpha chain.